A 256-amino-acid chain; its full sequence is Glutamate racemase (256 aa).

Residues 11–12 and 43–44 each bind substrate; these read DS and YG. Residue C74 is the Proton donor/acceptor of the active site. A substrate-binding site is contributed by 75–76; it reads NT. The Proton donor/acceptor role is filled by C182. Position 183–184 (183–184) interacts with substrate; that stretch reads TH.

It belongs to the aspartate/glutamate racemases family.

The catalysed reaction is L-glutamate = D-glutamate. Its pathway is cell wall biogenesis; peptidoglycan biosynthesis. Provides the (R)-glutamate required for cell wall biosynthesis. The protein is Glutamate racemase of Leptospira interrogans serogroup Icterohaemorrhagiae serovar Lai (strain 56601).